A 284-amino-acid chain; its full sequence is MAVDIEYSYSSMAPSLRRERFTFKISPKLNKPLRPCIQLGSKDEAGRMVAPTVQEKKVKKRVSFADNQGLALTMVKVFSEFDDPLDIPFNITELLDNIVSLTTAESESFVLDFPQPSADYLDFRNRLQTNHVCLENCVLKEKAIAGTVKVQNLAFEKVVKIRMTFDTWKSFTDFPCQYVKDTYAGSDRDTFSFDISLPEKIQSYERMEFAVCYECNGQSYWDSNKGKNYRITRAELRSTQGMTEPYNGPDFGISFDQFGSPRCSFGLFPEWPSYLGYEKLGPYY.

The PP1-binding motif signature appears at 61-64 (RVSF). The CBM21 domain occupies 124-232 (RNRLQTNHVC…SNKGKNYRIT (109 aa)). Ser260 carries the post-translational modification Phosphoserine.

Interacts with glycogen, PPP1CC catalytic subunit of PP1 and PYGL. Associates with glycogen particles. Forms complexes with debranching enzyme, glycogen phosphorylase, glycogen synthase and phosphorylase kinase which is necessary for its regulation of PP1 activity. As to expression, highly expressed in liver. Moderately expressed in kidney, heart, testis, spleen and lung. Weakly expressed in skeletal muscle (at protein level). Expressed predominantly in liver. Expressed moderately in heart. Expressed weakly in lung, kidney, spleen and skeletal muscle.

Acts as a glycogen-targeting subunit for phosphatase PP1. Facilitates interaction of the PP1 with enzymes of the glycogen metabolism and regulates its activity. Suppresses the rate at which PP1 dephosphorylates (inactivates) glycogen phosphorylase and enhances the rate at which it activates glycogen synthase and therefore limits glycogen breakdown. Its activity is inhibited by PYGL, resulting in inhibition of the glycogen synthase and glycogen phosphorylase phosphatase activities of PP1. Dramatically increases basal and insulin-stimulated glycogen synthesis upon overexpression in hepatocytes. The protein is Protein phosphatase 1 regulatory subunit 3B (Ppp1r3b) of Rattus norvegicus (Rat).